Reading from the N-terminus, the 169-residue chain is MICLVLTIFANLFPAACTGAHERTFLAVKPDGVQRRLVGEIVRRFERKGFKLVALKLVQASEELLREHYAELRERPFYGRLVKYMASGPVVAMVWQGLDVVRTSRALIGATNPADAPPGTIRGDFCIEVGKNLIHGSDSVESARREIALWFRADELLCWEDSAGHWLYE.

6 residues coordinate ADP: Lys-29, Arg-105, Thr-111, Arg-122, Val-129, and Asn-132. The active-site Pros-phosphohistidine intermediate is His-135.

Belongs to the NDK family. In terms of assembly, homohexamer. Interacts (via its N-terminal region) with KAT5; this interaction enables recruitment of NME3 at DNA damage sites where it plays a role in the repair of DNA. Found in association with several ciliary nephronophthisis proteins, including NEK8, CEP164, ANKS6. Requires Mg(2+) as cofactor.

Its subcellular location is the mitochondrion outer membrane. The protein localises to the cytoplasm. It is found in the cytoskeleton. It localises to the cilium basal body. The catalysed reaction is a 2'-deoxyribonucleoside 5'-diphosphate + ATP = a 2'-deoxyribonucleoside 5'-triphosphate + ADP. The enzyme catalyses a ribonucleoside 5'-diphosphate + ATP = a ribonucleoside 5'-triphosphate + ADP. In terms of biological role, catalyzes the phosphorylation of ribonucleosides and deoxyribonucleoside diphosphates, other than ATP, into the corresponding triphosphates with ATP as the major phosphate donor. The ATP gamma phosphate is transferred to the nucleoside diphosphate beta phosphate via a ping-pong mechanism, using a phosphorylated active-site intermediate. Through the catalyzed exchange of gamma-phosphate between di- and triphosphonucleosides participates in regulation of intracellular nucleotide homeostasis. Inhibits granulocyte differentiation. May be required for ciliary function during renal development. Its function is as follows. Independently of its kinase activity, facilitates mitochondrial tethering prior to membrane fusion through its direct membrane-binding and hexamerization. Implicated in repair of both single- and double-stranded breaks in DNA through its association with the ribonucleotide reductase complex (RNR complex) via its interaction with the histone acetyltransferase KAT5, this interaction enables recruitment of NME3 at DNA damage sites where it plays a role in the repair of DNA, independently of its kinase activity. In Homo sapiens (Human), this protein is Nucleoside diphosphate kinase 3.